We begin with the raw amino-acid sequence, 123 residues long: Large ribosomal subunit protein uL14c (123 aa).

This sequence belongs to the universal ribosomal protein uL14 family. Part of the 50S ribosomal subunit.

The protein resides in the plastid. It localises to the chloroplast. Binds to 23S rRNA. The sequence is that of Large ribosomal subunit protein uL14c from Triticum aestivum (Wheat).